A 224-amino-acid polypeptide reads, in one-letter code: SPI-2 type 3 secretion system stator protein (224 aa).

Belongs to the SctL stator family. In terms of assembly, the core secretion machinery of the T3SS is composed of approximately 20 different proteins, including cytoplasmic components, a base, an export apparatus and a needle. This subunit is part of the cytosolic complex. Interacts directly with SsaN/SctN2 (T3SS-2 ATPase).

The protein localises to the cytoplasm. In terms of biological role, component of the type III secretion system (T3SS), also called injectisome, which is used to inject bacterial effector proteins into eukaryotic host cells. Acts as a regulator of the SsaN/SctN2 ATPase activity. The chain is SPI-2 type 3 secretion system stator protein from Salmonella typhimurium (strain LT2 / SGSC1412 / ATCC 700720).